Here is a 352-residue protein sequence, read N- to C-terminus: Phenylalanine--tRNA ligase alpha subunit (352 aa).

Glu258 contributes to the Mg(2+) binding site.

It belongs to the class-II aminoacyl-tRNA synthetase family. Phe-tRNA synthetase alpha subunit type 1 subfamily. In terms of assembly, tetramer of two alpha and two beta subunits. Mg(2+) is required as a cofactor.

It is found in the cytoplasm. The catalysed reaction is tRNA(Phe) + L-phenylalanine + ATP = L-phenylalanyl-tRNA(Phe) + AMP + diphosphate + H(+). The polypeptide is Phenylalanine--tRNA ligase alpha subunit (Staphylococcus saprophyticus subsp. saprophyticus (strain ATCC 15305 / DSM 20229 / NCIMB 8711 / NCTC 7292 / S-41)).